Here is a 763-residue protein sequence, read N- to C-terminus: Dual specificity tyrosine-phosphorylation-regulated kinase 1A (763 aa).

Residue Ser14 is modified to Phosphoserine. A disordered region spans residues 32 to 57 (GQMPHSHQYSDRRQPNISDQQVSALS). A compositionally biased stretch (polar residues) spans 46–57 (PNISDQQVSALS). The residue at position 111 (Tyr111) is a Phosphotyrosine; by autocatalysis. Residues 115-136 (KKRRHQQGQGDDSSHKKERKVY) are disordered. The Bipartite nuclear localization signal signature appears at 117–134 (RRHQQGQGDDSSHKKERK). Position 140 is a phosphotyrosine; by autocatalysis (Tyr140). The residue at position 145 (Tyr145) is a Phosphotyrosine. Residue Tyr159 is modified to Phosphotyrosine; by autocatalysis. A Protein kinase domain is found at 159–479 (YEIDSLIGKG…PYYALQHSFF (321 aa)). Position 165-173 (165-173 (IGKGSFGQV)) interacts with ATP. Tyr177 carries the post-translational modification Phosphotyrosine; by autocatalysis. Lys188 serves as a coordination point for ATP. Phosphotyrosine; by autocatalysis is present on Tyr219. Residue 238 to 241 (FEML) participates in ATP binding. The active-site Proton acceptor is Asp287. Ser310 is subject to Phosphoserine; by autocatalysis. Phosphotyrosine; by autocatalysis is present on residues Tyr319 and Tyr321. The residue at position 402 (Thr402) is a Phosphothreonine; by autocatalysis. A disordered region spans residues 408–442 (TKDGKREYKPPGTRKLHNILGVETGGPGGRRAGES). Tyr449 is subject to Phosphotyrosine; by autocatalysis. Residues 485–501 (EGTNTSNSVSTSPAMEQ) are compositionally biased toward polar residues. Disordered regions lie at residues 485–540 (EGTN…HSGG), 596–679 (NALH…GNQA), and 744–763 (DREESPMTGVCVQQSPVASS). Positions 502–525 (SQSSGTTSSTSSSSGGSSGTSNSG) are enriched in low complexity. Ser529 and Ser538 each carry phosphoserine. The interval 595-625 (QNALHHHHGNSSHHHHHHHHHHHHHGQQALG) is histidine-rich domain (HRD). Residues 598-620 (LHHHHGNSSHHHHHHHHHHHHHG) show a composition bias toward basic residues. Positions 634 to 645 (NSPTNSSSTQDS) are enriched in polar residues. Residues 654-672 (SMTSLSSSTTSSSTSSSST) show a composition bias toward low complexity. Ser748 and Ser758 each carry phosphoserine. The span at 754–763 (CVQQSPVASS) shows a compositional bias: polar residues.

The protein belongs to the protein kinase superfamily. CMGC Ser/Thr protein kinase family. MNB/DYRK subfamily. As to quaternary structure, interacts with RAD54L2/ARIP4. Interacts with CRY2. Interacts with RANBP9. Interacts with WDR68. Interacts with SIRT1. In terms of assembly, (Microbial infection) Interacts with human adenovirus 5 E1A protein. Post-translationally, autophosphorylated on numerous tyrosine residues. Can also autophosphorylate on serine and threonine residues (in vitro). As to expression, ubiquitous. Highest levels in skeletal muscle, testis, fetal lung and fetal kidney.

It localises to the nucleus. It is found in the nucleus speckle. It carries out the reaction L-seryl-[protein] + ATP = O-phospho-L-seryl-[protein] + ADP + H(+). The enzyme catalyses L-threonyl-[protein] + ATP = O-phospho-L-threonyl-[protein] + ADP + H(+). The catalysed reaction is L-tyrosyl-[protein] + ATP = O-phospho-L-tyrosyl-[protein] + ADP + H(+). It catalyses the reaction [DNA-directed RNA polymerase] + ATP = phospho-[DNA-directed RNA polymerase] + ADP + H(+). With respect to regulation, inhibited by RANBP9. Inhibited by harmine, leucettamine B and leucettine L41. Its function is as follows. Dual-specificity kinase which possesses both serine/threonine and tyrosine kinase activities. Exhibits a substrate preference for proline at position P+1 and arginine at position P-3. Plays an important role in double-strand breaks (DSBs) repair following DNA damage. Mechanistically, phosphorylates RNF169 and increases its ability to block accumulation of TP53BP1 at the DSB sites thereby promoting homologous recombination repair (HRR). Also acts as a positive regulator of transcription by acting as a CTD kinase that mediates phosphorylation of the CTD (C-terminal domain) of the large subunit of RNA polymerase II (RNAP II) POLR2A. May play a role in a signaling pathway regulating nuclear functions of cell proliferation. Modulates alternative splicing by phosphorylating the splice factor SRSF6. Has pro-survival function and negatively regulates the apoptotic process. Promotes cell survival upon genotoxic stress through phosphorylation of SIRT1. This in turn inhibits p53/TP53 activity and apoptosis. Phosphorylates SEPTIN4, SEPTIN5 and SF3B1 at 'Thr-434'. This is Dual specificity tyrosine-phosphorylation-regulated kinase 1A from Homo sapiens (Human).